Reading from the N-terminus, the 243-residue chain is UPF0758 protein MAE_44350 (243 aa).

Positions V113–L235 constitute an MPN domain. The Zn(2+) site is built by H184, H186, and D197. The JAMM motif motif lies at H184–D197.

Belongs to the UPF0758 family.

The polypeptide is UPF0758 protein MAE_44350 (Microcystis aeruginosa (strain NIES-843 / IAM M-2473)).